Reading from the N-terminus, the 119-residue chain is Chorion class CA protein ERA.2 (119 aa).

A signal peptide spans 1–21 (MSKLVVFLFCIQVCFIQNVYS). The interval 22 to 55 (QCLGRVGPGGPPLGPYGGPLGGPGYGPVGYGGCG) is left arm. The segment at 56–103 (GYGGSGIGNVAVAGELPVAGSTGVTGQVPVIGAVEFAGPACAVGSVSI) is central domain. The tract at residues 104 to 119 (SGACGPTCGCGGSPFY) is right arm.

The protein belongs to the chorion protein family.

Its function is as follows. This protein is one of many from the eggshell of the silk moth. This Bombyx mori (Silk moth) protein is Chorion class CA protein ERA.2 (ERA.2).